A 127-amino-acid polypeptide reads, in one-letter code: Major sperm protein 78 (127 aa).

N-acetylalanine is present on alanine 2. The MSP domain maps to 9 to 126 (DIQTQPGTKI…RRKNLPIEYN (118 aa)).

In terms of tissue distribution, sperm.

Its subcellular location is the cell projection. It is found in the pseudopodium. It localises to the cytoplasm. The protein localises to the cytoskeleton. In terms of biological role, central component in molecular interactions underlying sperm crawling. Forms an extensive filament system that extends from sperm villipoda, along the leading edge of the pseudopod. The sequence is that of Major sperm protein 78 (msp-78) from Caenorhabditis elegans.